A 649-amino-acid polypeptide reads, in one-letter code: tRNA-guanine(15) transglycosylase (649 aa).

D88 serves as the catalytic Nucleophile. Positions 123 and 194 each coordinate substrate. C280, C282, and C285 together coordinate Zn(2+). Residues 573-648 (KYRIVIDSSV…VAVTLRGGLK (76 aa)) form the PUA domain.

Belongs to the archaeosine tRNA-ribosyltransferase family. The cofactor is Zn(2+).

The catalysed reaction is guanosine(15) in tRNA + 7-cyano-7-deazaguanine = 7-cyano-7-carbaguanosine(15) in tRNA + guanine. It functions in the pathway tRNA modification; archaeosine-tRNA biosynthesis. In terms of biological role, exchanges the guanine residue with 7-cyano-7-deazaguanine (preQ0) at position 15 in the dihydrouridine loop (D-loop) of archaeal tRNAs. The protein is tRNA-guanine(15) transglycosylase of Methanococcus maripaludis (strain C7 / ATCC BAA-1331).